The chain runs to 415 residues: Amylovoran biosynthesis protein AmsJ (415 aa).

This sequence belongs to the polysaccharide pyruvyl transferase family.

It participates in glycan metabolism; exopolysaccharide biosynthesis. Its function is as follows. Involved in the biosynthesis of amylovoran which functions as a virulence factor. The polypeptide is Amylovoran biosynthesis protein AmsJ (amsJ) (Erwinia amylovora (Fire blight bacteria)).